The primary structure comprises 256 residues: MTKFWIGTSWKMNKTLAEARLFAEALKAADAGRSPDIQRFVIPPFTAVREVKEILSGTSVKVGAQNMHWADQGTWTGEISPLMLKDCNLDIVELGHSERREHFGETNETVGLKVEAAVRHGLIPLICIGETLEDCESGRAAAVLEEEVRGALSKLSEAQKQAEILFAYEPVWAIGENGIPASADYADARQAEIIAVAQSVLARRVPCLYGGSVNPGNCEELIACPHIDGLFIGRSAWNVEGYLDILARCATKVQAN.

H96 (electrophile) is an active-site residue. E169 (proton acceptor) is an active-site residue. Substrate-binding residues include G175 and S212.

This sequence belongs to the triosephosphate isomerase family. In terms of assembly, homodimer.

Its subcellular location is the cytoplasm. It carries out the reaction L-erythrulose 1-phosphate = D-erythrulose 4-phosphate. The protein operates within carbohydrate metabolism; erythritol degradation. Functionally, catalyzes the isomerization of D-erythrulose-4P to L-erythrulose-1P. The chain is L-erythrulose-1-phosphate isomerase from Brucella melitensis biotype 1 (strain ATCC 23456 / CCUG 17765 / NCTC 10094 / 16M).